The primary structure comprises 1523 residues: Slit homolog 3 protein (1523 aa).

The first 33 residues, 1–33, serve as a signal peptide directing secretion; it reads MALGRTGAGAAVRARLALGLALASILSGPPAAA. Residues 34–61 enclose the LRRNT domain; it reads CPTKCTCSAASVDCHGLGLRAVPRGIPR. LRR repeat units lie at residues 62-83, 86-107, 110-131, 134-155, 158-179, and 182-203; these read NAERLDLDRNNITRITKMDFAG, NLRVLHLEDNQVSIIERGAFQD, QLERLRLNKNKLQVLPELLFQS, KLTRLDLSENQIQGIPRKAFRG, GVKNLQLDNNHISCIEDGAFRA, and DLEILTLNNNNISRILVTSFNH. Asparagine 72 carries N-linked (GlcNAc...) asparagine glycosylation. N-linked (GlcNAc...) asparagine glycosylation occurs at asparagine 192. In terms of domain architecture, LRRCT 1 spans 215 to 265; the sequence is NHLYCDCHLAWLSDWLRQRRTIGQFTLCMAPVHLRGFSVADVQKKEYVCPG. Residues 271–307 form the LRRNT 2 domain; sequence PACNANSLSCPSACSCSNNIVDCRGKGLTEIPANLPE. Cysteine 284 and cysteine 293 are disulfide-bonded. LRR repeat units lie at residues 308-329, 332-353, 356-377, 380-401, and 404-425; these read GIVEIRLEQNSIKSIPAGAFTQ, KLKRIDISKNQISDIAPDAFQG, SLTSLVLYGNKITEIPKGLFDG, SLQLLLLNANKINCLRVNTFQD, and NLNLLSLYDNKLQTISKGLFVP. One can recognise an LRRCT 2 domain in the interval 437-487; the sequence is NPFVCDCHLKWLADYLQDNPIETSGARCSSPRRLANKRISQIKSKKFRCSG. Intrachain disulfides connect cysteine 441/cysteine 464, cysteine 443/cysteine 485, cysteine 505/cysteine 511, and cysteine 509/cysteine 518. Residues 496 to 532 enclose the LRRNT 3 domain; that stretch reads SSECFMDLVCPEKCRCEGTIVDCSNQKLARIPSHLPE. 5 LRR repeats span residues 533-554, 558-579, 582-603, 606-627, and 630-651; these read YTTDLRLNDNDISVLEATGIFK, NLRKINLSNNRIKEVREGAFDG, GVQELMLTGNQLETMHGRMFRG, SLKTLMLRSNLISCVSNDTFAG, and SVRLLSLYDNRITTITPGAFTT. Asparagine 563 is a glycosylation site (N-linked (GlcNAc...) asparagine). Asparagine 622 carries N-linked (GlcNAc...) asparagine glycosylation. An LRRCT 3 domain is found at 663–713; sequence NPFNCNCHMAWLGRWLRKRRIVSGNPRCQKPFFLKEIPIQDVAIQDFTCDG. 2 disulfide bridges follow: cysteine 667–cysteine 690 and cysteine 669–cysteine 711. The LRRNT 4 domain occupies 716–752; sequence ESSCQLSPRCPEQCTCVETVVRCSNRGLHALPKGMPK. LRR repeat units lie at residues 753-774, 776-797, 800-821, and 824-845; these read DVTELYLEGNHLTAVPKELSAF, QLTLIDLSNNSISMLTNHTFSN, HLSTLILSYNRLRCIPVHAFNG, and SLRVLTLHGNDISSVPEGSFND. N-linked (GlcNAc...) asparagine glycans are attached at residues asparagine 784, asparagine 792, and asparagine 797. An LRRCT 4 domain is found at 857–907; sequence NPLHCDCSLRWLSEWVKAGYKEPGIARCSSPESMADRLLLTTPTHRFQCKG. 6 EGF-like domains span residues 918 to 953, 955 to 994, 996 to 1032, 1034 to 1072, 1074 to 1110, and 1119 to 1155; these read NACLSSPCKNNGTCSQDPVEQYRCTCPYSYKGKDCT, PINTCVQNPCEHGGTCHLSENLRDGFSCSCPLGFEGQRCE, NPDDCEDNDCENSATCVDGINNYACLCPPNYTGELCD, VIDYCVPEMNLCQHEAKCISLDKGFRCECVPGYSGKLCE, NNDDCVAHKCRHGAQCVDEVNGYTCICPQGFSGLFCE, and QTSPCDQYECQNGAQCIVVQQEPTCRCPPGFAGPRCE. 18 cysteine pairs are disulfide-bonded: cysteine 920/cysteine 931, cysteine 925/cysteine 941, cysteine 943/cysteine 952, cysteine 959/cysteine 970, cysteine 964/cysteine 982, cysteine 984/cysteine 993, cysteine 1000/cysteine 1011, cysteine 1005/cysteine 1020, cysteine 1022/cysteine 1031, cysteine 1038/cysteine 1051, cysteine 1045/cysteine 1060, cysteine 1062/cysteine 1071, cysteine 1078/cysteine 1089, cysteine 1083/cysteine 1098, cysteine 1100/cysteine 1109, cysteine 1123/cysteine 1134, cysteine 1128/cysteine 1143, and cysteine 1145/cysteine 1154. Asparagine 928 carries an N-linked (GlcNAc...) asparagine glycan. The N-linked (GlcNAc...) asparagine glycan is linked to asparagine 1025. In terms of domain architecture, Laminin G-like spans 1158–1332; it reads ITVNFVGKDS…PQSLGVSPGC (175 aa). 2 N-linked (GlcNAc...) asparagine glycosylation sites follow: asparagine 1181 and asparagine 1247. 5 disulfides stabilise this stretch: cysteine 1305-cysteine 1332, cysteine 1355-cysteine 1364, cysteine 1372-cysteine 1382, cysteine 1377-cysteine 1391, and cysteine 1393-cysteine 1402. 2 EGF-like domains span residues 1340–1365 and 1368–1403; these read HGLCRSVEKDSVVCECHPGWTGPLCD and ARDPCLGHSCRHGTCMATGDSYVCKCAEGYGGALCD. Asparagine 1406 carries an N-linked (GlcNAc...) asparagine glycan. In terms of domain architecture, EGF-like 9 spans 1408-1444; sequence SASACSAFKCHHGQCHISDRGEPYCLCQPGFSGHHCE. 7 cysteine pairs are disulfide-bonded: cysteine 1412–cysteine 1422, cysteine 1417–cysteine 1432, cysteine 1434–cysteine 1443, cysteine 1449–cysteine 1487, cysteine 1467–cysteine 1501, cysteine 1478–cysteine 1517, and cysteine 1482–cysteine 1519. The CTCK domain occupies 1449-1523; that stretch reads CMGEIVREAI…HLECGCRACS (75 aa).

Its subcellular location is the secreted. Functionally, may act as molecular guidance cue in cellular migration, and function may be mediated by interaction with roundabout homolog receptors. The sequence is that of Slit homolog 3 protein (Slit3) from Mus musculus (Mouse).